The primary structure comprises 64 residues: Large ribosomal subunit protein bL35c (64 aa).

It belongs to the bacterial ribosomal protein bL35 family.

It localises to the plastid. Its subcellular location is the chloroplast. This is Large ribosomal subunit protein bL35c from Trieres chinensis (Marine centric diatom).